A 48-amino-acid polypeptide reads, in one-letter code: ATP synthase protein 8 (48 aa).

The helical transmembrane segment at Leu13 to Leu32 threads the bilayer.

It belongs to the ATPase protein 8 family. As to quaternary structure, F-type ATPases have 2 components, CF(1) - the catalytic core - and CF(0) - the membrane proton channel.

Its subcellular location is the mitochondrion membrane. Functionally, mitochondrial membrane ATP synthase (F(1)F(0) ATP synthase or Complex V) produces ATP from ADP in the presence of a proton gradient across the membrane which is generated by electron transport complexes of the respiratory chain. F-type ATPases consist of two structural domains, F(1) - containing the extramembraneous catalytic core and F(0) - containing the membrane proton channel, linked together by a central stalk and a peripheral stalk. During catalysis, ATP synthesis in the catalytic domain of F(1) is coupled via a rotary mechanism of the central stalk subunits to proton translocation. Part of the complex F(0) domain. Minor subunit located with subunit a in the membrane. In Kluyveromyces lactis (strain ATCC 8585 / CBS 2359 / DSM 70799 / NBRC 1267 / NRRL Y-1140 / WM37) (Yeast), this protein is ATP synthase protein 8 (ATP8).